The following is a 473-amino-acid chain: Ribosomal RNA small subunit methyltransferase F (473 aa).

Residues 124 to 130 (ASAPGSK), E148, D175, and D193 contribute to the S-adenosyl-L-methionine site. The Nucleophile role is filled by C246.

Belongs to the class I-like SAM-binding methyltransferase superfamily. RsmB/NOP family.

The protein resides in the cytoplasm. The enzyme catalyses cytidine(1407) in 16S rRNA + S-adenosyl-L-methionine = 5-methylcytidine(1407) in 16S rRNA + S-adenosyl-L-homocysteine + H(+). Specifically methylates the cytosine at position 1407 (m5C1407) of 16S rRNA. In Aliivibrio salmonicida (strain LFI1238) (Vibrio salmonicida (strain LFI1238)), this protein is Ribosomal RNA small subunit methyltransferase F.